The primary structure comprises 93 residues: Large ribosomal subunit protein bL27 (93 aa).

Belongs to the bacterial ribosomal protein bL27 family.

The chain is Large ribosomal subunit protein bL27 from Trichormus variabilis (strain ATCC 29413 / PCC 7937) (Anabaena variabilis).